A 247-amino-acid chain; its full sequence is MLYASYMSYVSIKMHASSNGAHISGAETLVDESRAYEFLSSFYQRANTHSKGKPEITTLTIRRIKDADIITIPALEVKCLPALHPSEAHRQVIEQLSNVVSPTIAQMALHTVLNARNMRGAILLCAHTGQRLDPYDPQRGVRASTFGVTPQESAGPTLNKSHFNEALVLASKVMSAPGIVAEICISDDPAYTTGYVTTENTYIRIPHMKDPYSPIGGRVFLLDTRVSTPEDTISYLEQKPVLITGVN.

It belongs to the BioW family. Homodimer. Mg(2+) is required as a cofactor.

It catalyses the reaction heptanedioate + ATP + CoA = 6-carboxyhexanoyl-CoA + AMP + diphosphate. The protein operates within metabolic intermediate metabolism; pimeloyl-CoA biosynthesis; pimeloyl-CoA from pimelate: step 1/1. Its function is as follows. Catalyzes the transformation of pimelate into pimeloyl-CoA with concomitant hydrolysis of ATP to AMP. The sequence is that of 6-carboxyhexanoate--CoA ligase from Corynebacterium diphtheriae (strain ATCC 700971 / NCTC 13129 / Biotype gravis).